Here is a 410-residue protein sequence, read N- to C-terminus: Elongation factor Tu, chloroplastic (410 aa).

In terms of domain architecture, tr-type G spans 10–215; the sequence is KPHVNIGTIG…IVDEYIPTPQ (206 aa). Residues 19–26 form a G1 region; the sequence is GHVDHGKT. 19 to 26 provides a ligand contact to GTP; the sequence is GHVDHGKT. Residue Thr-26 participates in Mg(2+) binding. Residues 61 to 65 are G2; that stretch reads GITIN. The interval 82-85 is G3; that stretch reads DCPG. GTP contacts are provided by residues 82-86 and 137-140; these read DCPGH and NKAD. Residues 137 to 140 form a G4 region; sequence NKAD. A G5 region spans residues 175–177; that stretch reads SAL.

The protein belongs to the TRAFAC class translation factor GTPase superfamily. Classic translation factor GTPase family. EF-Tu/EF-1A subfamily.

The protein resides in the plastid. The protein localises to the chloroplast. It catalyses the reaction GTP + H2O = GDP + phosphate + H(+). Functionally, GTP hydrolase that promotes the GTP-dependent binding of aminoacyl-tRNA to the A-site of ribosomes during protein biosynthesis. The protein is Elongation factor Tu, chloroplastic (tufA) of Cyanidioschyzon merolae (strain NIES-3377 / 10D) (Unicellular red alga).